We begin with the raw amino-acid sequence, 202 residues long: tRNA (pseudouridine(54)-N(1))-methyltransferase (202 aa).

The S-adenosyl-L-methionine site is built by leucine 134 and glycine 155.

The protein belongs to the methyltransferase superfamily. TrmY family. As to quaternary structure, homodimer.

The protein localises to the cytoplasm. The catalysed reaction is pseudouridine(54) in tRNA + S-adenosyl-L-methionine = N(1)-methylpseudouridine(54) in tRNA + S-adenosyl-L-homocysteine + H(+). Functionally, specifically catalyzes the N1-methylation of pseudouridine at position 54 (Psi54) in tRNAs. The chain is tRNA (pseudouridine(54)-N(1))-methyltransferase from Thermococcus gammatolerans (strain DSM 15229 / JCM 11827 / EJ3).